Here is a 288-residue protein sequence, read N- to C-terminus: Bifunctional protein FolD 2 (288 aa).

NADP(+) contacts are provided by residues 166 to 168 (GRS) and Ser191.

It belongs to the tetrahydrofolate dehydrogenase/cyclohydrolase family. As to quaternary structure, homodimer.

The catalysed reaction is (6R)-5,10-methylene-5,6,7,8-tetrahydrofolate + NADP(+) = (6R)-5,10-methenyltetrahydrofolate + NADPH. It carries out the reaction (6R)-5,10-methenyltetrahydrofolate + H2O = (6R)-10-formyltetrahydrofolate + H(+). It functions in the pathway one-carbon metabolism; tetrahydrofolate interconversion. Functionally, catalyzes the oxidation of 5,10-methylenetetrahydrofolate to 5,10-methenyltetrahydrofolate and then the hydrolysis of 5,10-methenyltetrahydrofolate to 10-formyltetrahydrofolate. In Frankia casuarinae (strain DSM 45818 / CECT 9043 / HFP020203 / CcI3), this protein is Bifunctional protein FolD 2.